The sequence spans 389 residues: Cytochrome b (389 aa).

A run of 4 helical transmembrane segments spans residues 36-56, 80-102, 117-137, and 183-203; these read MGSL…FLAM, WLIR…THIA, VWTV…LGYC, and FFAF…MHMM. Residues His-86 and His-100 each contribute to the heme b site. Heme b contacts are provided by His-187 and His-201. His-206 is a binding site for a ubiquinone. A run of 4 helical transmembrane segments spans residues 229 to 249, 293 to 313, 325 to 345, and 352 to 372; these read FVFK…LFVF, LLGV…PITD, LSKF…IIGM, and FVLI…IIVP.

This sequence belongs to the cytochrome b family. As to quaternary structure, fungal cytochrome b-c1 complex contains 10 subunits; 3 respiratory subunits, 2 core proteins and 5 low-molecular weight proteins. Cytochrome b-c1 complex is a homodimer. The cofactor is heme b.

It is found in the mitochondrion inner membrane. Component of the ubiquinol-cytochrome c reductase complex (complex III or cytochrome b-c1 complex) that is part of the mitochondrial respiratory chain. The b-c1 complex mediates electron transfer from ubiquinol to cytochrome c. Contributes to the generation of a proton gradient across the mitochondrial membrane that is then used for ATP synthesis. The polypeptide is Cytochrome b (COB) (Vanderwaltozyma polyspora (strain ATCC 22028 / DSM 70294 / BCRC 21397 / CBS 2163 / NBRC 10782 / NRRL Y-8283 / UCD 57-17) (Kluyveromyces polysporus)).